The sequence spans 21 residues: Venom peptide Ocy4 (21 aa).

In terms of tissue distribution, expressed by the venom gland.

It localises to the secreted. The chain is Venom peptide Ocy4 from Opisthacanthus cayaporum (South American scorpion).